Reading from the N-terminus, the 230-residue chain is Orotidine 5'-phosphate decarboxylase (230 aa).

Substrate contacts are provided by residues D8, K32, D59 to T68, T118, R178, Q187, G207, and R208. K61 acts as the Proton donor in catalysis.

The protein belongs to the OMP decarboxylase family. Type 1 subfamily. Homodimer.

It carries out the reaction orotidine 5'-phosphate + H(+) = UMP + CO2. It functions in the pathway pyrimidine metabolism; UMP biosynthesis via de novo pathway; UMP from orotate: step 2/2. In terms of biological role, catalyzes the decarboxylation of orotidine 5'-monophosphate (OMP) to uridine 5'-monophosphate (UMP). In Nautilia profundicola (strain ATCC BAA-1463 / DSM 18972 / AmH), this protein is Orotidine 5'-phosphate decarboxylase.